Here is a 36-residue protein sequence, read N- to C-terminus: Pollen allergen Dac g 2 (36 aa).

Belongs to the expansin family. Expansin B subfamily.

It localises to the secreted. This is Pollen allergen Dac g 2 from Dactylis glomerata (Orchard grass).